Reading from the N-terminus, the 560-residue chain is Zinc finger protein 619 (560 aa).

C2H2-type zinc fingers lie at residues 188-210 (YKCGECGSYYNPHSDFHLHQRVH), 216-238 (YTCKECGKTFRYNSKLSRHQKIH), 244-266 (YSCEECGQAFSQNSHLLQHQKLH), 272-294 (YECTDCGKTFSYNSKLIRHQRIH), 300-322 (FKCKECGKAFSCSYDCIIHERIH), 328-350 (YECKECGKSLSSNSVLIQHQRIH), 356-378 (YECKECGKAFHRSSVFLQHQRFH), 384-406 (YKCNECWKTFSCSSRFIVHQRIH), 412-434 (YECQECGKTFSQKITLVQHQRVH), and 440-462 (YECKECGKAFRWNASFIQHQKWH).

Belongs to the krueppel C2H2-type zinc-finger protein family.

It is found in the nucleus. May be involved in transcriptional regulation. This is Zinc finger protein 619 (ZNF619) from Homo sapiens (Human).